A 356-amino-acid polypeptide reads, in one-letter code: Guanine nucleotide-binding protein alpha-2 subunit (356 aa).

Residues methionine 1 to glutamine 25 form a disordered region. Glycine 2 carries the N-myristoyl glycine lipid modification. Residue cysteine 4 is the site of S-palmitoyl cysteine attachment. Residues glutamate 7–glutamine 25 show a composition bias toward basic and acidic residues. Residues glutamine 14–leucine 338 form the G-alpha domain. The G1 motif stretch occupies residues arginine 17–aspartate 30. GTP is bound by residues glutamine 25, glutamine 27, serine 28, asparagine 29, aspartate 30, valine 135, glutamate 160, alanine 166, valine 188, glutamate 254, serine 255, cysteine 257, and phenylalanine 310. Asparagine 29 contacts Mg(2+). Residues phenylalanine 158 to alanine 166 are G2 motif. A Mg(2+)-binding site is contributed by alanine 166. Residues arginine 181–valine 190 are G3 motif. The tract at residues methionine 250–cysteine 257 is G4 motif. The G5 motif stretch occupies residues glutamine 308–leucine 313.

This sequence belongs to the G-alpha family. G(q) subfamily. As to quaternary structure, g proteins are composed of 3 units; alpha, beta and gamma. The alpha chain contains the guanine nucleotide binding site. The cofactor is Mg(2+).

Its function is as follows. Guanine nucleotide-binding proteins (G proteins) are involved as modulators or transducers in various transmembrane signaling systems. Involved in behavioral responses to P.aeruginosa by controlling the expression of daf-7, a member of the TGF-beta family, in ASJ sensory neurons. This is Guanine nucleotide-binding protein alpha-2 subunit (gpa-2) from Caenorhabditis briggsae.